The chain runs to 105 residues: Fluoride-specific ion channel FluC (105 aa).

Transmembrane regions (helical) follow at residues 14–34 (FPLP…VFVV), 44–64 (LSPL…AFSL), and 79–99 (ALYV…GLWL). 2 residues coordinate Na(+): Gly54 and Thr57.

This sequence belongs to the fluoride channel Fluc/FEX (TC 1.A.43) family.

The protein localises to the cell inner membrane. The enzyme catalyses fluoride(in) = fluoride(out). Na(+) is not transported, but it plays an essential structural role and its presence is essential for fluoride channel function. Its function is as follows. Fluoride-specific ion channel. Important for reducing fluoride concentration in the cell, thus reducing its toxicity. This chain is Fluoride-specific ion channel FluC, found in Jannaschia sp. (strain CCS1).